Consider the following 2149-residue polypeptide: Polyketide synthase 1 (2149 aa).

Residues 19–261 (FIFGDQSSCN…TRLAVHAPYH (243 aa)) form an N-terminal acylcarrier protein transacylase domain (SAT) region. In terms of domain architecture, Ketosynthase family 3 (KS3) spans 394-829 (ESKIAIIGMS…GGNTALLVED (436 aa)). Active-site for beta-ketoacyl synthase activity residues include Cys-566, His-701, and His-745. Residues 929–1233 (AFVFSGQGSQ…PSLMRNKDGW (305 aa)) form a malonyl-CoA:ACP transacylase (MAT) domain region. The For acyl/malonyl transferase activity role is filled by Ser-1018. The segment at 1310–1624 (TASVHRIVHE…RKVLNTAMPP (315 aa)) is product template (PT) domain. Residues 1314–1447 (HRIVHESVDK…SSLHFERPKV (134 aa)) form an N-terminal hotdog fold region. Residues 1314–1619 (HRIVHESVDK…FQGIPRKVLN (306 aa)) enclose the PKS/mFAS DH domain. His-1346 acts as the Proton acceptor; for dehydratase activity in catalysis. Residues 1474–1619 (LNSRMSSGVI…FQGIPRKVLN (146 aa)) are C-terminal hotdog fold. Asp-1533 serves as the catalytic Proton donor; for dehydratase activity. Residues 1619–1657 (NTAMPPPKSQNEAPVRSAPAKPAAKPPKSASSEHSGHFA) are disordered. The span at 1635–1650 (SAPAKPAAKPPKSASS) shows a compositional bias: low complexity. In terms of domain architecture, Carrier 1 spans 1678 to 1752 (RNPMLAVFKI…DLATHLGLDT (75 aa)). Ser-1712 is modified (O-(pantetheine 4'-phosphoryl)serine). Residues 1755 to 1790 (SDQSSGQSSSSGGLSPRSDSIGEITSSATTPPSLSP) show a composition bias toward low complexity. A disordered region spans residues 1755–1796 (SDQSSGQSSSSGGLSPRSDSIGEITSSATTPPSLSPRGSVSG). The Carrier 2 domain maps to 1793-1870 (SVSGSQCKDV…SFKHMFQQGH (78 aa)). Ser-1830 bears the O-(pantetheine 4'-phosphoryl)serine mark. The interval 1882-2147 (LKQYRATSTL…ERVAAFIRST (266 aa)) is thioesterase (TE) domain. The For thioesterase activity role is filled by Ser-1973.

Its function is as follows. Polyketide synthase; part of the Pks1 gene cluster that mediates the biosynthesis of an anthraquinone derivative pigment that contributes to conidial pigmentation that provides protection from UV radiation, heat and cold stress. The polyketide synthase Pks1 produces 1-acetyl-2,4,6,8-tetrahydroxy-9,10-anthraquinone though condensation of acetyl-CoA with malonyl-CoA. The dehydratase EthD and the laccase Mlac1 further convert the anthraquinone derivative into the final conidial pigment. This chain is Polyketide synthase 1, found in Metarhizium majus (strain ARSEF 297).